Consider the following 494-residue polypeptide: UPF0371 protein SUB1165 (494 aa).

This sequence belongs to the UPF0371 family.

The chain is UPF0371 protein SUB1165 from Streptococcus uberis (strain ATCC BAA-854 / 0140J).